Reading from the N-terminus, the 233-residue chain is Large ribosomal subunit protein uL1 (233 aa).

It belongs to the universal ribosomal protein uL1 family. Part of the 50S ribosomal subunit.

Its function is as follows. Binds directly to 23S rRNA. The L1 stalk is quite mobile in the ribosome, and is involved in E site tRNA release. Functionally, protein L1 is also a translational repressor protein, it controls the translation of the L11 operon by binding to its mRNA. The polypeptide is Large ribosomal subunit protein uL1 (Shewanella oneidensis (strain ATCC 700550 / JCM 31522 / CIP 106686 / LMG 19005 / NCIMB 14063 / MR-1)).